We begin with the raw amino-acid sequence, 138 residues long: MFKFVMVFAVLGVAAAGVAHVPHPQVSHPVGRSEDVHAEVKSEHSDVRADGFDADLLVSNSIQQASSGDVHGNIHGSFSWISPEGEHVEIKYVADENGYQPVGAVLPTPPPIPEAIARAVAWLEAHPQAPEPVHHSHH.

The first 16 residues, 1–16 (MFKFVMVFAVLGVAAA), serve as a signal peptide directing secretion. One can recognise a Chitin-binding type R&amp;R domain in the interval 49 to 110 (ADGFDADLLV…PVGAVLPTPP (62 aa)).

In terms of biological role, component of the larval cuticle. The protein is Larval cuticle protein 1 (Lcp1) of Drosophila miranda (Fruit fly).